Here is a 95-residue protein sequence, read N- to C-terminus: Co-chaperonin GroES (95 aa).

Belongs to the GroES chaperonin family. Heptamer of 7 subunits arranged in a ring. Interacts with the chaperonin GroEL.

It localises to the cytoplasm. Functionally, together with the chaperonin GroEL, plays an essential role in assisting protein folding. The GroEL-GroES system forms a nano-cage that allows encapsulation of the non-native substrate proteins and provides a physical environment optimized to promote and accelerate protein folding. GroES binds to the apical surface of the GroEL ring, thereby capping the opening of the GroEL channel. The sequence is that of Co-chaperonin GroES from Desulforapulum autotrophicum (strain ATCC 43914 / DSM 3382 / VKM B-1955 / HRM2) (Desulfobacterium autotrophicum).